Here is a 159-residue protein sequence, read N- to C-terminus: Phosphopantetheine adenylyltransferase (159 aa).

Thr-10 lines the substrate pocket. Residues 10-11 (TF) and His-18 each bind ATP. Substrate is bound by residues Lys-42, Met-74, and Arg-88. ATP-binding positions include 89–91 (GLR), Glu-99, and 124–130 (WSFISSS).

This sequence belongs to the bacterial CoaD family. In terms of assembly, homohexamer. Requires Mg(2+) as cofactor.

It localises to the cytoplasm. It catalyses the reaction (R)-4'-phosphopantetheine + ATP + H(+) = 3'-dephospho-CoA + diphosphate. The protein operates within cofactor biosynthesis; coenzyme A biosynthesis; CoA from (R)-pantothenate: step 4/5. In terms of biological role, reversibly transfers an adenylyl group from ATP to 4'-phosphopantetheine, yielding dephospho-CoA (dPCoA) and pyrophosphate. The chain is Phosphopantetheine adenylyltransferase from Salmonella agona (strain SL483).